We begin with the raw amino-acid sequence, 516 residues long: MANQLRERHQSLKKKYGELIDGDPSVPPEKRKQVNLAQLLGDSREKCKKMESEIKELQQRLGEVQGDNKLLRMTIAKQRLGDDEVGKRHFAPHEREDLVLQLEKAKEQIEAFEHDLQASLDELQDVKQERSFFQDKAERLNQELNHVLGGHEKRIIDIDALCMENRYLQERLKQVQEEVNLQKSNLVKYKNALEKRRNSKSNTKLSSSALTGVLSAKQVQELLSEEHGCSLPATPQSVSDLKSLATALLETIHEKNMVIQHQRQTNKILGNRVAELEKKLRTLEVSGLWSLPGGRDTITLSNPSSPSRGPKSLIPAFTDVPHHKPLTNEEHGQPGVELGSPALDEGSDNEAAKQLANSQVPLGNTYDNTYLHPFIPLLCQENEDLERQGPEIAKMTQELTAGEIEETSFEIPPDSQSTASSQENHDNLQSPFSSPEPSGAMSKKHPDISLGDENIVPVPQECADEITAGSNVNQCTEAQHDNKDCWEIEDCDSSEKAANNSCELIERCNRLNESVS.

Residues 1 to 18 (MANQLRERHQSLKKKYGE) show a composition bias toward basic and acidic residues. Residues 1-29 (MANQLRERHQSLKKKYGELIDGDPSVPPE) are disordered. Coiled-coil stretches lie at residues 1-195 (MANQ…ALEK) and 259-286 (IQHQ…LEVS). Basic and acidic residues predominate over residues 321-332 (PHHKPLTNEEHG). Disordered regions lie at residues 321–350 (PHHK…SDNE) and 406–452 (ETSF…SLGD). The span at 414–436 (DSQSTASSQENHDNLQSPFSSPE) shows a compositional bias: polar residues.

It belongs to the CCDC149 family.

The chain is Coiled-coil domain-containing protein 149 (ccdc149) from Xenopus laevis (African clawed frog).